The primary structure comprises 623 residues: Phosphoenolpyruvate carboxykinase [GTP] (623 aa).

Substrate is bound by residues Arg-86 and 220–222 (YGG). Lys-229 and His-248 together coordinate Mn(2+). Substrate is bound at residue Ser-270. 271 to 276 (MCGKTS) serves as a coordination point for GTP. Residue Cys-272 is part of the active site. Asp-289 contacts Mn(2+). Residue 384–386 (NAR) participates in substrate binding. 2 residues coordinate GTP: Arg-386 and Arg-418.

This sequence belongs to the phosphoenolpyruvate carboxykinase [GTP] family. As to quaternary structure, homotetramer. It depends on Mn(2+) as a cofactor.

It localises to the cytoplasm. The catalysed reaction is oxaloacetate + GTP = phosphoenolpyruvate + GDP + CO2. The protein operates within carbohydrate biosynthesis; gluconeogenesis. Functionally, involved in the gluconeogenesis. Catalyzes the conversion of oxaloacetate (OAA) to phosphoenolpyruvate (PEP), the rate-limiting step in the metabolic pathway that produces glucose from lactate and other precursors derived from the citric acid cycle. This is Phosphoenolpyruvate carboxykinase [GTP] (pckG) from Thermococcus kodakarensis (strain ATCC BAA-918 / JCM 12380 / KOD1) (Pyrococcus kodakaraensis (strain KOD1)).